Reading from the N-terminus, the 542-residue chain is Cryptochrome-1 (542 aa).

The 136-residue stretch at 5–140 folds into the Photolyase/cryptochrome alpha/beta domain; it reads GANVIWFRHG…DFVEKVSHTL (136 aa). Residues R237, S265, S267, Q311, H378, 410–412, C416, and N419 contribute to the FAD site; that span reads DAD.

It belongs to the DNA photolyase class-1 family. In terms of assembly, interacts with tim and per; promoted by light conditions. Interaction with tim irreversibly commits tim to proteasomal degradation. Interacts with l(1)G0136/CG8198. Requires FAD as cofactor. In terms of tissue distribution, expressed at higher levels in the head than in body and it is more expressed in antennae than in legs, wings and mouth appendages. Prominent expression is seen in cells of the lateral brain, which are close to or coincident with the clock neurons. Abundance oscillates in a circadian manner.

The protein resides in the cytoplasm. Its subcellular location is the perinuclear region. It is found in the nucleus. Blue light-dependent regulator that is the input of the circadian feedback loop. Has no photolyase activity for cyclobutane pyrimidine dimers or 6-4 photoproducts. Regulation of expression by light suggests a role in photoreception for locomotor activity rhythms. Functions, together with per, as a transcriptional repressor required for the oscillation of peripheral circadian clocks and for the correct specification of clock cells. Genes directly activated by the transcription factors Clock (Clk) and cycle (cyc) are repressed by cry. Necessary for light-dependent magnetosensitivity, an intact circadian system is not required for the magnetoreception mechanism to operate. Required for both the naive and trained responses to magnetic field, consistent with the notion that cry is in the input pathway of magnetic sensing. This chain is Cryptochrome-1, found in Drosophila melanogaster (Fruit fly).